A 188-amino-acid polypeptide reads, in one-letter code: E3 ubiquitin-protein ligase RNF183 (188 aa).

Residues 1-157 (MAEQQGREPE…RECFRNPHFR (157 aa)) lie on the Cytoplasmic side of the membrane. The segment at 11 to 58 (CPVCWNPFNNTFHTPKVLDCCHSFCVECLAHISLVTPTRRRLLCPLCR) adopts an RING-type zinc-finger fold. A helical; Anchor for type IV membrane protein transmembrane segment spans residues 158–178 (IFAYMMAVILCGTVLFIFSIF). The Lumenal segment spans residues 179–188 (CTRRFFWGVG).

In terms of assembly, interacts with FATE1. Interacts with SEC16A. Interacts with BCL2L1. Autoubiquitinated (in vitro).

It is found in the endoplasmic reticulum membrane. The protein localises to the endoplasmic reticulum. It localises to the golgi apparatus. The protein resides in the cis-Golgi network membrane. Its subcellular location is the lysosome. The enzyme catalyses S-ubiquitinyl-[E2 ubiquitin-conjugating enzyme]-L-cysteine + [acceptor protein]-L-lysine = [E2 ubiquitin-conjugating enzyme]-L-cysteine + N(6)-ubiquitinyl-[acceptor protein]-L-lysine.. Its pathway is protein modification; protein ubiquitination. Its function is as follows. Acts as an E3 ubiquitin ligase catalyzing the covalent attachment of ubiquitin moieties onto substrate proteins. Triggers apoptosis in response to prolonged ER stress by mediating the polyubiquitination and subsequent proteasomal degradation of BCL2L1. May collaborate with FATE1 to restrain BIK protein levels thus regulating apoptotic signaling. This Bos taurus (Bovine) protein is E3 ubiquitin-protein ligase RNF183 (RNF183).